We begin with the raw amino-acid sequence, 371 residues long: Putative F-box/kelch-repeat protein At3g10510 (371 aa).

The region spanning 13–61 (SVMTSIPDDVIMECIAPRVPRYNHSMLSLVSKQFRSLVASPRLYKTRSL) is the F-box domain. Kelch repeat units follow at residues 123 to 165 (NIFV…DMPV), 178 to 229 (KIYI…GPSS), and 257 to 305 (NECV…YIVS).

The protein is Putative F-box/kelch-repeat protein At3g10510 of Arabidopsis thaliana (Mouse-ear cress).